The chain runs to 504 residues: MESGVRILSLLILLHNSLASESEESRLIKHLFTSYDQKARPSKGLDDVVPVTLKLTLTNLIDLNEKEETLTTNVWVQIAWNDDRLVWNVTDYGGIGFVPVPHDIMWLPDIVLENNIDGNFEVAYYANVLVYNTGYIYWLPPAIFRSTCNIEITYFPFDWQNCSLVFRSKTYSANEIDLQLVTDDETGLPFDQVDIDREAFTENGEWAIMHRPARKILNPKYSKEDLRYQEIVFNLIIQRKPLFYIINIIVPCVLISFLVVLVYFLPAKAGGQKCTVSISVLLAQTVFLFLIAQMVPETSLSVPLIGKYLMFVMFVSTLIVLSCVIVLNVSLRSPSTHNLSTKVKHMLLEVLPQFLHLRVEPCDEGEETPRERRRSSLGIMLKAEEYVLKKPRSELMFERQRERHGMRREPDGYRADGFDVGVTTTLYRNLAQCAPEIKDCVDACNFITQNTKEQNRTGSEMENWILIGKVLDVLCFWVALPLFVLGTLAIFLMGHFNTAPEHPF.

A signal peptide spans 1–19; that stretch reads MESGVRILSLLILLHNSLA. Residues 20-240 lie on the Extracellular side of the membrane; sequence SESEESRLIK…IVFNLIIQRK (221 aa). 2 N-linked (GlcNAc...) asparagine glycosylation sites follow: Asn88 and Asn161. Residues Cys148 and Cys162 are joined by a disulfide bond. Residues 241–265 traverse the membrane as a helical segment; the sequence is PLFYIINIIVPCVLISFLVVLVYFL. Residues 266–273 lie on the Cytoplasmic side of the membrane; it reads PAKAGGQK. A helical transmembrane segment spans residues 274–292; it reads CTVSISVLLAQTVFLFLIA. The Extracellular portion of the chain corresponds to 293–307; that stretch reads QMVPETSLSVPLIGK. Residues 308–329 traverse the membrane as a helical segment; it reads YLMFVMFVSTLIVLSCVIVLNV. Residues 330–473 lie on the Cytoplasmic side of the membrane; sequence SLRSPSTHNL…WILIGKVLDV (144 aa). A helical membrane pass occupies residues 474–497; sequence LCFWVALPLFVLGTLAIFLMGHFN. At 498–504 the chain is on the extracellular side; that stretch reads TAPEHPF.

Belongs to the ligand-gated ion channel (TC 1.A.9) family. Acetylcholine receptor (TC 1.A.9.1) subfamily. Epsilon/CHRNE sub-subfamily. In terms of assembly, pentamer of two alpha chains, and one each of the beta, delta, and gamma (in immature muscle) or epsilon (in mature muscle) chains.

It is found in the postsynaptic cell membrane. Its subcellular location is the cell membrane. It carries out the reaction K(+)(in) = K(+)(out). The enzyme catalyses Na(+)(in) = Na(+)(out). Its function is as follows. After binding acetylcholine, the AChR responds by an extensive change in conformation that affects all subunits and leads to opening of an ion-conducting channel across the plasma membrane. The sequence is that of Acetylcholine receptor subunit epsilon (chrne) from Xenopus laevis (African clawed frog).